An 81-amino-acid chain; its full sequence is Large ribosomal subunit protein bL31B (81 aa).

Belongs to the bacterial ribosomal protein bL31 family. Type B subfamily. In terms of assembly, part of the 50S ribosomal subunit.

The sequence is that of Large ribosomal subunit protein bL31B from Borreliella burgdorferi (strain ZS7) (Borrelia burgdorferi).